The following is a 303-amino-acid chain: Vesicle-trafficking protein SEC22c (303 aa).

Topologically, residues 1-183 are cytoplasmic; the sequence is MSMILFASIV…EPAPNLRMKP (183 aa). One can recognise a Longin domain in the interval 8-119; it reads SIVRVRDGLP…YAFLEFDSVI (112 aa). Residues 184–204 traverse the membrane as a helical segment; it reads VTALGVLSLVLNIMCAALNLI. Over 205 to 223 the chain is Lumenal; sequence RGVHLAEHSLQVAQEEVGN. Residues 224–244 form a helical membrane-spanning segment; it reads ILAFFIPSVACIVQCYLYLFY. The Cytoplasmic portion of the chain corresponds to 245–248; the sequence is SPAR. A helical transmembrane segment spans residues 249 to 269; the sequence is TLKVLLMLASICLGNAYLHGL. Residue arginine 270 is a topological domain, lumenal. A helical transmembrane segment spans residues 271–291; the sequence is NTWQILFHVGVAFLSSYQILT. At 292-303 the chain is on the cytoplasmic side; sequence RQLQERQSDYGV.

This sequence belongs to the synaptobrevin family.

The protein resides in the endoplasmic reticulum membrane. Functionally, may be involved in vesicle transport between the ER and the Golgi complex. This chain is Vesicle-trafficking protein SEC22c (Sec22c), found in Mus musculus (Mouse).